The sequence spans 430 residues: Glutamate-1-semialdehyde 2,1-aminomutase (430 aa).

Lys-265 is modified (N6-(pyridoxal phosphate)lysine).

It belongs to the class-III pyridoxal-phosphate-dependent aminotransferase family. HemL subfamily. As to quaternary structure, homodimer. Pyridoxal 5'-phosphate serves as cofactor.

It localises to the cytoplasm. It carries out the reaction (S)-4-amino-5-oxopentanoate = 5-aminolevulinate. It functions in the pathway porphyrin-containing compound metabolism; protoporphyrin-IX biosynthesis; 5-aminolevulinate from L-glutamyl-tRNA(Glu): step 2/2. This chain is Glutamate-1-semialdehyde 2,1-aminomutase, found in Shewanella baltica (strain OS195).